Reading from the N-terminus, the 298-residue chain is Ethanolamine ammonia-lyase small subunit (298 aa).

Val-210, Glu-231, and Cys-261 together coordinate adenosylcob(III)alamin.

The protein belongs to the EutC family. In terms of assembly, the basic unit is a heterodimer which dimerizes to form tetramers. The heterotetramers trimerize; 6 large subunits form a core ring with 6 small subunits projecting outwards. Requires adenosylcob(III)alamin as cofactor.

It localises to the bacterial microcompartment. It carries out the reaction ethanolamine = acetaldehyde + NH4(+). The protein operates within amine and polyamine degradation; ethanolamine degradation. Catalyzes the deamination of various vicinal amino-alcohols to oxo compounds. Allows this organism to utilize ethanolamine as the sole source of nitrogen and carbon in the presence of external vitamin B12. This chain is Ethanolamine ammonia-lyase small subunit, found in Salmonella schwarzengrund (strain CVM19633).